Reading from the N-terminus, the 205-residue chain is StAR-related lipid transfer protein 4 (205 aa).

The region spanning 1 to 205 (MEGLSDVASF…NFYGDLRKAL (205 aa)) is the START domain.

It carries out the reaction cholesterol(in) = cholesterol(out). Involved in the intracellular transport of cholesterol. Binds cholesterol or other sterols. This is StAR-related lipid transfer protein 4 (STARD4) from Homo sapiens (Human).